We begin with the raw amino-acid sequence, 443 residues long: Transcriptional adapter 2-alpha (443 aa).

The residue at position 6 (Ser-6) is a Phosphoserine. A ZZ-type zinc finger spans residues 12–69 (SDKPPCRGCSSYLMEPYIKCAECGPPPFFLCLQCFTRGFEYKKHQSDHTYEIMTSDFP). Residues Cys-17, Cys-20, Cys-31, Cys-34, Cys-42, Cys-45, His-55, and His-59 each contribute to the Zn(2+) site. Residues 70-122 (VLDPSWTAQEEMALLEAVMDCGFGNWQDVANQMCTKTKEECEKHYMKHFINNP) form the SANT domain. Residues Lys-132 and Lys-138 each participate in a glycyl lysine isopeptide (Lys-Gly) (interchain with G-Cter in SUMO2) cross-link. Polar residues predominate over residues 347–359 (LSPSVPMTSNSGR). Positions 347-372 (LSPSVPMTSNSGRRSAPPLNLTGLPG) are disordered. The SWIRM domain maps to 356–443 (NSGRRSAPPL…LIREGYITKA (88 aa)). A DNA-binding region spans residues 426–435 (KTRKIYDFLI).

As to quaternary structure, interacts with GCN5 and NR3C1. Associated with the P/CAF protein in the PCAF complex. Component of the PCAF complex, at least composed of TADA2L/ADA2, TADA3L/ADA3, TAF5L/PAF65-beta, TAF6L/PAF65-alpha, TAF10/TAFII30, TAF12/TAFII20, TAF9/TAFII31 and TRRAP. Component of the ADA2A-containing complex (ATAC), composed of KAT14, KAT2A, TADA2L, TADA3L, ZZ3, MBIP, WDR5, YEATS2, CCDC101 and DR1. Interacts with CCDC134.

The protein localises to the nucleus. It localises to the chromosome. Functionally, component of the ATAC complex, a complex with histone acetyltransferase activity on histones H3 and H4. Required for the function of some acidic activation domains, which activate transcription from a distant site. Binds double-stranded DNA. Binds dinucleosomes, probably at the linker region between neighboring nucleosomes. Plays a role in chromatin remodeling. May promote TP53/p53 'Lys-321' acetylation, leading to reduced TP53 stability and transcriptional activity. May also promote XRCC6 acetylation thus facilitating cell apoptosis in response to DNA damage. The polypeptide is Transcriptional adapter 2-alpha (TADA2A) (Bos taurus (Bovine)).